The primary structure comprises 599 residues: Elongation factor 4 (599 aa).

The region spanning 5–187 (SHIRNFSIIA…VLIKSVPAPV (183 aa)) is the tr-type G domain. Residues 17–22 (DHGKST) and 134–137 (NKID) each bind GTP.

This sequence belongs to the TRAFAC class translation factor GTPase superfamily. Classic translation factor GTPase family. LepA subfamily.

The protein resides in the cell inner membrane. The enzyme catalyses GTP + H2O = GDP + phosphate + H(+). Functionally, required for accurate and efficient protein synthesis under certain stress conditions. May act as a fidelity factor of the translation reaction, by catalyzing a one-codon backward translocation of tRNAs on improperly translocated ribosomes. Back-translocation proceeds from a post-translocation (POST) complex to a pre-translocation (PRE) complex, thus giving elongation factor G a second chance to translocate the tRNAs correctly. Binds to ribosomes in a GTP-dependent manner. This chain is Elongation factor 4, found in Saccharophagus degradans (strain 2-40 / ATCC 43961 / DSM 17024).